Here is a 230-residue protein sequence, read N- to C-terminus: MTTLTARPEAITFDPQQSALIVVDMQNAYATPGGYLDLAGFDVSTTRPVIANIQTAVTAARAAGMLIIWFQNGWDEQYVEAGGPGSPNFHKSNALKTMRKQPQLQGKLLAKGSWDYQLVDELVPQPGDIVLPKPRYSGFFNTPLDSILRSRGIRHLVFTGIATNVCVESTLRDGFFLEYFGVVLEDATHQAGPEFAQKAALFNIETFFGWVSDVETFCDALSSTSFARIA.

The Proton acceptor role is filled by Asp24. The active site involves Lys133. The active-site Nucleophile is the Cys166.

This sequence belongs to the isochorismatase family. RutB subfamily.

It carries out the reaction (Z)-3-ureidoacrylate + H2O + H(+) = (Z)-3-aminoacrylate + NH4(+) + CO2. It catalyses the reaction (Z)-3-ureidoacrylate + H2O = (Z)-3-aminoacrylate + carbamate + H(+). The catalysed reaction is (Z)-2-methylureidoacrylate + H2O + H(+) = (Z)-2-methylaminoacrylate + NH4(+) + CO2. Functionally, hydrolyzes ureidoacrylate to form aminoacrylate and carbamate. The carbamate hydrolyzes spontaneously, thereby releasing one of the nitrogen atoms of the pyrimidine ring as ammonia and one of its carbon atoms as CO2. The polypeptide is Ureidoacrylate amidohydrolase RutB (Escherichia coli O150:H5 (strain SE15)).